Here is a 420-residue protein sequence, read N- to C-terminus: Exodeoxyribonuclease 7 large subunit (420 aa).

Belongs to the XseA family. As to quaternary structure, heterooligomer composed of large and small subunits.

The protein localises to the cytoplasm. The enzyme catalyses Exonucleolytic cleavage in either 5'- to 3'- or 3'- to 5'-direction to yield nucleoside 5'-phosphates.. In terms of biological role, bidirectionally degrades single-stranded DNA into large acid-insoluble oligonucleotides, which are then degraded further into small acid-soluble oligonucleotides. This is Exodeoxyribonuclease 7 large subunit from Helicobacter pylori (strain HPAG1).